The chain runs to 166 residues: Small ribosomal subunit protein uS5 (166 aa).

The S5 DRBM domain occupies 12-75; that stretch reads YIEKLVQVNR…EAARRNMIQV (64 aa).

Belongs to the universal ribosomal protein uS5 family. As to quaternary structure, part of the 30S ribosomal subunit. Contacts proteins S4 and S8.

With S4 and S12 plays an important role in translational accuracy. In terms of biological role, located at the back of the 30S subunit body where it stabilizes the conformation of the head with respect to the body. This Pseudomonas entomophila (strain L48) protein is Small ribosomal subunit protein uS5.